The following is a 100-amino-acid chain: Putative pterin-4-alpha-carbinolamine dehydratase (100 aa).

The protein belongs to the pterin-4-alpha-carbinolamine dehydratase family.

The enzyme catalyses (4aS,6R)-4a-hydroxy-L-erythro-5,6,7,8-tetrahydrobiopterin = (6R)-L-erythro-6,7-dihydrobiopterin + H2O. This is Putative pterin-4-alpha-carbinolamine dehydratase from Bradyrhizobium diazoefficiens (strain JCM 10833 / BCRC 13528 / IAM 13628 / NBRC 14792 / USDA 110).